Consider the following 144-residue polypeptide: Sec-independent protein translocase protein TatB (144 aa).

The chain crosses the membrane as a helical span at residues 1-21 (MFEIGFWELVLVAIIGIVVVG). The interval 97-144 (KMIDEPPYQEPPPAAHSVQTDAEAYRDTGIEPADKSSSPEHHHDDAAR) is disordered. Basic and acidic residues predominate over residues 119 to 144 (EAYRDTGIEPADKSSSPEHHHDDAAR).

This sequence belongs to the TatB family. As to quaternary structure, the Tat system comprises two distinct complexes: a TatABC complex, containing multiple copies of TatA, TatB and TatC subunits, and a separate TatA complex, containing only TatA subunits. Substrates initially bind to the TatABC complex, which probably triggers association of the separate TatA complex to form the active translocon.

Its subcellular location is the cell inner membrane. Functionally, part of the twin-arginine translocation (Tat) system that transports large folded proteins containing a characteristic twin-arginine motif in their signal peptide across membranes. Together with TatC, TatB is part of a receptor directly interacting with Tat signal peptides. TatB may form an oligomeric binding site that transiently accommodates folded Tat precursor proteins before their translocation. The sequence is that of Sec-independent protein translocase protein TatB from Dichelobacter nodosus (strain VCS1703A).